Consider the following 221-residue polypeptide: Glutathione S-transferase class-mu 26 kDa isozyme 1 (221 aa).

The GST N-terminal domain maps to 2 to 82 (PAKLGYWKIR…YIADKHGMIG (81 aa)). Residues 7–8 (YW), 40–44 (WFSKK), 53–54 (NL), and 66–67 (QS) contribute to the glutathione site. The GST C-terminal domain maps to 84–202 (TPEERARVSM…ESNRFIKWPL (119 aa)). Y110 serves as a coordination point for substrate.

Belongs to the GST superfamily. Mu family. In terms of assembly, homodimer.

The catalysed reaction is RX + glutathione = an S-substituted glutathione + a halide anion + H(+). Functionally, conjugation of reduced glutathione to a wide number of exogenous and endogenous hydrophobic electrophiles. In terms of biological role, GST isoenzymes appear to play a central role in the parasite detoxification system. Other functions are also suspected including a role in increasing the solubility of haematin in the parasite gut. The chain is Glutathione S-transferase class-mu 26 kDa isozyme 1 from Fasciola hepatica (Liver fluke).